A 134-amino-acid chain; its full sequence is MDLRTGEYITAHQATSGVYTFEITNPLYFTITRHNQQPFNSKYNFLTFQIRFNHNLRKALGIHKCFLNFRIWTTLQSPTGHFLRVFRYQVYKYLNNIGVISLNNVIRAVDYVLFDVFENTIDVIEQHEIKYNLY.

Belongs to the geminiviridae replication enhancer protein family. Homooligomer. Interacts with the replication-associated protein (REP). Interacts with host proliferating cell nuclear antigen (PCNA). Interacts with host retinoblastoma-related protein 1 (RBR1), and may thereby deregulate the host cell cycle. Oligomerization and interaction with PCNA are necessary for optimal replication enhancement.

Functionally, increases viral DNA accumulation. Enhances infectivity and symptom expression. This Cynanchum acutum (Tomato) protein is Replication enhancer protein.